The chain runs to 364 residues: Probable dual-specificity RNA methyltransferase RlmN (364 aa).

Glu-107 serves as the catalytic Proton acceptor. Positions His-113–Asp-346 constitute a Radical SAM core domain. The cysteines at positions 120 and 351 are disulfide-linked. Positions 127, 131, and 134 each coordinate [4Fe-4S] cluster. Residues Gly-177–Glu-178, Ser-209, Ser-232–His-234, and Asn-308 contribute to the S-adenosyl-L-methionine site. The active-site S-methylcysteine intermediate is the Cys-351.

It belongs to the radical SAM superfamily. RlmN family. Requires [4Fe-4S] cluster as cofactor.

The protein localises to the cytoplasm. The catalysed reaction is adenosine(2503) in 23S rRNA + 2 reduced [2Fe-2S]-[ferredoxin] + 2 S-adenosyl-L-methionine = 2-methyladenosine(2503) in 23S rRNA + 5'-deoxyadenosine + L-methionine + 2 oxidized [2Fe-2S]-[ferredoxin] + S-adenosyl-L-homocysteine. It catalyses the reaction adenosine(37) in tRNA + 2 reduced [2Fe-2S]-[ferredoxin] + 2 S-adenosyl-L-methionine = 2-methyladenosine(37) in tRNA + 5'-deoxyadenosine + L-methionine + 2 oxidized [2Fe-2S]-[ferredoxin] + S-adenosyl-L-homocysteine. In terms of biological role, specifically methylates position 2 of adenine 2503 in 23S rRNA and position 2 of adenine 37 in tRNAs. Confers resistance to some classes of antibiotics. This Staphylococcus haemolyticus (strain JCSC1435) protein is Probable dual-specificity RNA methyltransferase RlmN.